The chain runs to 1306 residues: Kinesin-like protein KIN-14L (1306 aa).

Residues 142–456 form the Kinesin motor domain; that stretch reads NVKVFCRSRP…LSFSARAKNA (315 aa). Position 223–230 (223–230) interacts with ATP; the sequence is GQSRSGKT. 2 coiled-coil regions span residues 466–507 and 540–595; these read IKKW…ANDQ and HRIE…ALNS. Polar residues-rich tracts occupy residues 592 to 611 and 660 to 677; these read ALNSSDARSTIGSESASVIS and LGSSPQAPSPSNKQTNAQ. Disordered stretches follow at residues 592 to 627, 657 to 710, and 849 to 881; these read ALNSSDARSTIGSESASVISTPKMMESTADSSSVTK, KSGL…SGAI, and KSHTSRSRSSSRGSSPGRSPVHHHHDHGSRTSL. Residues 855-867 are compositionally biased toward low complexity; sequence SRSSSRGSSPGRS.

Belongs to the TRAFAC class myosin-kinesin ATPase superfamily. Kinesin family. KIN-14 subfamily.

The chain is Kinesin-like protein KIN-14L from Oryza sativa subsp. japonica (Rice).